The chain runs to 751 residues: MGPQGARRQAFLAFGDVTVDFTQKEWRLLSPAQRALYREVTLENYSHLVSLGILHSKPELIRRLEQGEVPWGEERRRRPGPCAGIYAEHVLRPKNLGLAHQRQQQLQFSDQSFQSDTAEGQEKEKSTKPMAFSSPPLRHAVSSRRRNSVVEIESSQGQRENPTEIDKVLKGIENSRWGAFKCAERGQDFSRKMMVIIHKKAHSRQKLFTCRECHQGFRDESALLLHQNTHTGEKSYVCSVCGRGFSLKANLLRHQRTHSGEKPFLCKVCGRGYTSKSYLTVHERTHTGEKPYECQECGRRFNDKSSYNKHLKAHSGEKPFVCKECGRGYTNKSYFVVHKRIHSGEKPYRCQECGRGFSNKSHLITHQRTHSGEKPFACRQCKQSFSVKGSLLRHQRTHSGEKPFVCKDCERSFSQKSTLVYHQRTHSGEKPFVCRECGQGFIQKSTLVKHQITHSEEKPFVCKDCGRGFIQKSTFTLHQRTHSEEKPYGCRECGRRFRDKSSYNKHLRAHLGEKRFFCRDCGRGFTLKPNLTIHQRTHSGEKPFMCKQCEKSFSLKANLLRHQWTHSGERPFNCKDCGRGFILKSTLLFHQKTHSGEKPFICSECGQGFIWKSNLVKHQLAHSGKQPFVCKECGRGFNWKGNLLTHQRTHSGEKPFVCNVCGQGFSWKRSLTRHHWRIHSKEKPFVCQECKRGYTSKSDLTVHERIHTGERPYECQECGRKFSNKSYYSKHLKRHLREKRFCTGSVGEASS.

A KRAB domain is found at 12 to 83 (LAFGDVTVDF…ERRRRPGPCA (72 aa)). Positions 101-116 (QRQQQLQFSDQSFQSD) are enriched in low complexity. The disordered stretch occupies residues 101–163 (QRQQQLQFSD…SSQGQRENPT (63 aa)). The C2H2-type 1; degenerate zinc-finger motif lies at 180-202 (FKCAERGQDFSRKMMVIIHKKAH). 9 C2H2-type zinc fingers span residues 208 to 230 (FTCR…QNTH), 236 to 258 (YVCS…QRTH), 264 to 286 (FLCK…ERTH), 292 to 314 (YECQ…LKAH), 320 to 342 (FVCK…KRIH), 348 to 370 (YRCQ…QRTH), 376 to 398 (FACR…QRTH), 404 to 426 (FVCK…QRTH), and 432 to 454 (FVCR…QITH). A Glycyl lysine isopeptide (Lys-Gly) (interchain with G-Cter in SUMO2) cross-link involves residue K458. C2H2-type zinc fingers lie at residues 460 to 482 (FVCK…QRTH), 488 to 510 (YGCR…LRAH), 516 to 538 (FFCR…QRTH), 544 to 566 (FMCK…QWTH), 572 to 594 (FNCK…QKTH), 600 to 622 (FICS…QLAH), 628 to 650 (FVCK…QRTH), 656 to 679 (FVCN…WRIH), 685 to 707 (FVCQ…ERIH), and 713 to 735 (YECQ…LKRH).

This sequence belongs to the krueppel C2H2-type zinc-finger protein family.

It localises to the nucleus. May be involved in transcriptional regulation. This Homo sapiens (Human) protein is Zinc finger protein 337 (ZNF337).